Reading from the N-terminus, the 259-residue chain is Phosphatidylserine decarboxylase proenzyme (259 aa).

Ser183 acts as the Schiff-base intermediate with substrate; via pyruvic acid in catalysis. The residue at position 183 (Ser183) is a Pyruvic acid (Ser); by autocatalysis.

This sequence belongs to the phosphatidylserine decarboxylase family. PSD-A subfamily. In terms of assembly, heterodimer of a large membrane-associated beta subunit and a small pyruvoyl-containing alpha subunit. Requires pyruvate as cofactor. Is synthesized initially as an inactive proenzyme. Formation of the active enzyme involves a self-maturation process in which the active site pyruvoyl group is generated from an internal serine residue via an autocatalytic post-translational modification. Two non-identical subunits are generated from the proenzyme in this reaction, and the pyruvate is formed at the N-terminus of the alpha chain, which is derived from the carboxyl end of the proenzyme. The post-translation cleavage follows an unusual pathway, termed non-hydrolytic serinolysis, in which the side chain hydroxyl group of the serine supplies its oxygen atom to form the C-terminus of the beta chain, while the remainder of the serine residue undergoes an oxidative deamination to produce ammonia and the pyruvoyl prosthetic group on the alpha chain.

It localises to the cell membrane. It catalyses the reaction a 1,2-diacyl-sn-glycero-3-phospho-L-serine + H(+) = a 1,2-diacyl-sn-glycero-3-phosphoethanolamine + CO2. The protein operates within phospholipid metabolism; phosphatidylethanolamine biosynthesis; phosphatidylethanolamine from CDP-diacylglycerol: step 2/2. In terms of biological role, catalyzes the formation of phosphatidylethanolamine (PtdEtn) from phosphatidylserine (PtdSer). In Neisseria gonorrhoeae (strain NCCP11945), this protein is Phosphatidylserine decarboxylase proenzyme.